Reading from the N-terminus, the 334-residue chain is Aspartate carbamoyltransferase catalytic subunit (334 aa).

Residues Arg-71 and Thr-72 each contribute to the carbamoyl phosphate site. Lys-99 provides a ligand contact to L-aspartate. Residues Arg-121, His-151, and Gln-154 each coordinate carbamoyl phosphate. Residues Arg-184 and Arg-239 each contribute to the L-aspartate site. The carbamoyl phosphate site is built by Gly-280 and Pro-281.

This sequence belongs to the aspartate/ornithine carbamoyltransferase superfamily. ATCase family. In terms of assembly, heterododecamer (2C3:3R2) of six catalytic PyrB chains organized as two trimers (C3), and six regulatory PyrI chains organized as three dimers (R2).

It carries out the reaction carbamoyl phosphate + L-aspartate = N-carbamoyl-L-aspartate + phosphate + H(+). The protein operates within pyrimidine metabolism; UMP biosynthesis via de novo pathway; (S)-dihydroorotate from bicarbonate: step 2/3. Catalyzes the condensation of carbamoyl phosphate and aspartate to form carbamoyl aspartate and inorganic phosphate, the committed step in the de novo pyrimidine nucleotide biosynthesis pathway. The chain is Aspartate carbamoyltransferase catalytic subunit from Pseudomonas putida (strain ATCC 47054 / DSM 6125 / CFBP 8728 / NCIMB 11950 / KT2440).